The chain runs to 183 residues: Adenine phosphoribosyltransferase (183 aa).

This sequence belongs to the purine/pyrimidine phosphoribosyltransferase family. As to quaternary structure, homodimer.

Its subcellular location is the cytoplasm. The catalysed reaction is AMP + diphosphate = 5-phospho-alpha-D-ribose 1-diphosphate + adenine. The protein operates within purine metabolism; AMP biosynthesis via salvage pathway; AMP from adenine: step 1/1. Catalyzes a salvage reaction resulting in the formation of AMP, that is energically less costly than de novo synthesis. This is Adenine phosphoribosyltransferase from Shewanella oneidensis (strain ATCC 700550 / JCM 31522 / CIP 106686 / LMG 19005 / NCIMB 14063 / MR-1).